A 185-amino-acid polypeptide reads, in one-letter code: Ribosome-recycling factor (185 aa).

It belongs to the RRF family.

Its subcellular location is the cytoplasm. Its function is as follows. Responsible for the release of ribosomes from messenger RNA at the termination of protein biosynthesis. May increase the efficiency of translation by recycling ribosomes from one round of translation to another. The sequence is that of Ribosome-recycling factor from Nocardia farcinica (strain IFM 10152).